Consider the following 484-residue polypeptide: UDP-N-acetylmuramate--L-alanine ligase (484 aa).

ATP is bound at residue 126–132 (GTHGKTT).

This sequence belongs to the MurCDEF family.

Its subcellular location is the cytoplasm. It carries out the reaction UDP-N-acetyl-alpha-D-muramate + L-alanine + ATP = UDP-N-acetyl-alpha-D-muramoyl-L-alanine + ADP + phosphate + H(+). It participates in cell wall biogenesis; peptidoglycan biosynthesis. Functionally, cell wall formation. The polypeptide is UDP-N-acetylmuramate--L-alanine ligase (Aeromonas hydrophila subsp. hydrophila (strain ATCC 7966 / DSM 30187 / BCRC 13018 / CCUG 14551 / JCM 1027 / KCTC 2358 / NCIMB 9240 / NCTC 8049)).